A 205-amino-acid polypeptide reads, in one-letter code: MSTDFLFPKIADCSYVSCYCEENVWKLCEQVKRTRPEELGKCYAVFVSNEGRTVPLWRQKAGRGDDQVVIWDYHVFFMHNPLPNRCLVFDLDTTLPFPTYFHKYVTETFRSDLALRPEHHRFFRVIPADTYLIEFSSDRRHMRRPDGSWIKPPPSYPPILSNTNTHCLGDFICMSAGKGPGSVYSLSEFVQNFYKSAHVMAQQNN.

Active-site residues include Cys-20, His-74, and Asp-90.

This sequence belongs to the NTAQ1 family. As to quaternary structure, monomer.

It catalyses the reaction N-terminal L-glutaminyl-[protein] + H2O = N-terminal L-glutamyl-[protein] + NH4(+). Its function is as follows. Mediates the side-chain deamidation of N-terminal glutamine residues to glutamate, an important step in N-end rule pathway of protein degradation. Conversion of the resulting N-terminal glutamine to glutamate renders the protein susceptible to arginylation, polyubiquitination and degradation as specified by the N-end rule. Does not act on substrates with internal or C-terminal glutamine and does not act on non-glutamine residues in any position. The polypeptide is Protein N-terminal glutamine amidohydrolase (tun) (Drosophila grimshawi (Hawaiian fruit fly)).